The sequence spans 193 residues: Acyl carrier protein phosphodiesterase (193 aa).

The protein belongs to the AcpH family.

It carries out the reaction holo-[ACP] + H2O = apo-[ACP] + (R)-4'-phosphopantetheine + H(+). Functionally, converts holo-ACP to apo-ACP by hydrolytic cleavage of the phosphopantetheine prosthetic group from ACP. The protein is Acyl carrier protein phosphodiesterase of Salmonella agona (strain SL483).